Reading from the N-terminus, the 331-residue chain is Bifunctional nuclease 1 (331 aa).

A BFN domain is found at 126 to 261 (CVQNNPRVLR…RIAYNNGLKV (136 aa)). One can recognise a UVR domain in the interval 291-326 (EAQEFDLVRNMLVAAVEERYKDAAQYRDQLFMFRAK).

Belongs to the bifunctional nuclease family.

Its subcellular location is the nucleus. In terms of biological role, bifunctional nuclease with both RNase and DNase activities. Involved in basal defense response. Participates in abscisic acid-derived callose deposition following infection by a necrotrophic pathogen. This is Bifunctional nuclease 1 (BBD1) from Oryza sativa subsp. indica (Rice).